A 700-amino-acid polypeptide reads, in one-letter code: Methionine--tRNA ligase (700 aa).

The short motif at 13–23 (PYANGDIHLGH) is the 'HIGH' region element. C144, C147, C157, and C160 together coordinate Zn(2+). A 'KMSKS' region motif is present at residues 341–345 (KMSKS). K344 contacts ATP. The tRNA-binding domain maps to 598 to 700 (DFAKVEMKVA…DNCVIGDLLA (103 aa)).

Belongs to the class-I aminoacyl-tRNA synthetase family. MetG type 1 subfamily. In terms of assembly, homodimer. Requires Zn(2+) as cofactor.

Its subcellular location is the cytoplasm. It carries out the reaction tRNA(Met) + L-methionine + ATP = L-methionyl-tRNA(Met) + AMP + diphosphate. In terms of biological role, is required not only for elongation of protein synthesis but also for the initiation of all mRNA translation through initiator tRNA(fMet) aminoacylation. The polypeptide is Methionine--tRNA ligase (Psychrobacter arcticus (strain DSM 17307 / VKM B-2377 / 273-4)).